A 459-amino-acid polypeptide reads, in one-letter code: Flagellar radial spoke protein 6 (459 aa).

Asymmetric dimethylarginine is present on Arg-267. A disordered region spans residues 309 to 330 (QGRTVTHKRDPPDEEEEPEKNF). An Asymmetric dimethylarginine modification is found at Arg-398. A disordered region spans residues 418–459 (CPPPPPVPQWGAPAAGVEGGQQLLLECNDLPPKPAPPEEEDE).

The protein belongs to the flagellar radial spoke RSP4/6 family. In terms of assembly, the radial spoke head is made of five different polypeptides (RSP1, RSP4, RSP6, RSP9, and RSP10). In terms of processing, asymmetrically dimethylated at Arg-267 and Arg-398 during flagellum resorption. Probably methylated by PRMT1.

It is found in the cytoplasm. The protein resides in the cytoskeleton. It localises to the flagellum axoneme. Its function is as follows. Flagellar radial spokes contribute to the regulation of dynein arm activity and thus the pattern of flagellar bending. They consist of a thin stalk, which is attached to the a subfiber of the outer doublet microtubule, and a bulbous head, which is attached to the stalk and appears to interact with the projections from the central pair of microtubules. This is Flagellar radial spoke protein 6 (RSP6) from Chlamydomonas reinhardtii (Chlamydomonas smithii).